Consider the following 162-residue polypeptide: Caveolin-2 (162 aa).

At 1-86 (MGLETEKADV…FEISKYVMYK (86 aa)) the chain is on the cytoplasmic side. Tyrosine 19 bears the Phosphotyrosine; by SRC mark. A phosphoserine mark is found at serine 20 and serine 23. The residue at position 27 (tyrosine 27) is a Phosphotyrosine; by SRC. Residue serine 36 is modified to Phosphoserine. The helical intramembrane region spans 87 to 107 (FLTVFLAIPLAFIAGILFATL). At 108 to 162 (SCLHIWILMPFVKTCLMVLPSVQTIWKSVTDVIIAPLCTSVGRCFSSVSLQLSQD) the chain is on the cytoplasmic side.

Belongs to the caveolin family. Monomer or homodimer. Interacts with CAV1; the interaction forms a stable heterooligomeric complex that is required for targeting to lipid rafts and for caveolae formation. Tyrosine phosphorylated forms do not form heterooligomers with the Tyr-19-phosphorylated form existing as a monomer or dimer, and the Tyr-27-form as a monomer only. Interacts (tyrosine phosphorylated form) with the SH2 domain-containing proteins, RASA1, NCK1 and SRC. Interacts (tyrosine phosphorylated form) with INSR, the interaction (Tyr-27-phosphorylated form) is increased on insulin stimulation. Interacts (Tyr-19 phosphorylated form) with MAPK1 (phosphorylated form); the interaction, promoted by insulin, leads to nuclear location and MAPK1 activation. Interacts with STAT3; the interaction is increased on insulin-induced tyrosine phosphorylation leading to STAT activation. In terms of processing, phosphorylated on serine and tyrosine residues. CAV1 promotes phosphorylation on Ser-23 which then targets the complex to the plasma membrane, lipid rafts and caveolae. Phosphorylation on Ser-36 appears to modulate mitosis in endothelial cells. Phosphorylation on both Tyr-19 and Tyr-27 is required for insulin-induced 'Ser-727' phosphorylation of STAT3 and its activation. Phosphorylation on Tyr-19 is required for insulin-induced phosphorylation of MAPK1 and DNA binding of STAT3. Tyrosine phosphorylation is induced by both EGF and insulin (By. similarity).

Its subcellular location is the nucleus. It is found in the cytoplasm. The protein resides in the golgi apparatus membrane. The protein localises to the cell membrane. It localises to the membrane. Its subcellular location is the caveola. In terms of biological role, may act as a scaffolding protein within caveolar membranes. Interacts directly with G-protein alpha subunits and can functionally regulate their activity. Acts as an accessory protein in conjunction with CAV1 in targeting to lipid rafts and driving caveolae formation. The Ser-36 phosphorylated form has a role in modulating mitosis in endothelial cells. Positive regulator of cellular mitogenesis of the MAPK signaling pathway. Required for the insulin-stimulated nuclear translocation and activation of MAPK1 and STAT3, and the subsequent regulation of cell cycle progression. The chain is Caveolin-2 (CAV2) from Gorilla gorilla gorilla (Western lowland gorilla).